The following is a 475-amino-acid chain: ISWI one complex protein 4 (475 aa).

A Phosphoserine modification is found at Ser-2. Thr-9 bears the Phosphothreonine mark. Disordered stretches follow at residues 42 to 84 (VSVH…DFGE), 181 to 296 (EEEY…IKYH), and 454 to 475 (EMDREKPSFSEDVKEEESKVGA). Phosphoserine occurs at positions 65 and 73. 3 stretches are compositionally biased toward acidic residues: residues 72–84 (QSEEEEDIEDFGE), 181–193 (EEEYVEEEEEENE), and 241–252 (ASEEEEEEEEEK). Phosphoserine is present on Ser-242. The segment covering 259-294 (KRPQRTKTKKVVVSKTKPNPKTKAKKEKPKPPKPIK) has biased composition (basic residues). Over residues 456 to 475 (DREKPSFSEDVKEEESKVGA) the composition is skewed to basic and acidic residues.

In terms of assembly, component of the ISW1B complex, which at least consists of ISW1, IOC2 and IOC4.

It localises to the nucleus. Functions as a component of the ISW1B complex, which acts in remodeling the chromatin by catalyzing an ATP-dependent alteration in the structure of nucleosomal DNA. The ISW1B complex acts within coding regions to control the amount of RNA polymerase II released into productive elongation and to coordinate elongation with termination and pre-mRNA processing. This Saccharomyces cerevisiae (strain ATCC 204508 / S288c) (Baker's yeast) protein is ISWI one complex protein 4 (IOC4).